A 308-amino-acid polypeptide reads, in one-letter code: MNQPLQHTTVLLDEAVHALLGDGDAPAGTFVDGTFGRGGHSRLILQRLGPQGRLVAFDKDTEAIQAAARITDARFSIRHQGFSHLGELPAASVSGVLLDLGVSSPQIDDPQRGFSFRFDGPLDMRMDTTRGQSVAEWLADAETAQIAEVIRDYGEERFAGPIAKAIVARRTERGPIASTAELADIVAGAVKTREPGQNPATRTFQALRIFINAELEELQQALEGSLHVLRPGGRLVVISFHSLEDRIVKQFIAQHSKEVYDRRAPFAPPQPMRLRALERIKPSTDEVAANARARSAVMRVAERTEVPA.

Residues 38 to 40 (GGH), Asp58, Phe82, Asp99, and Gln106 contribute to the S-adenosyl-L-methionine site.

The protein belongs to the methyltransferase superfamily. RsmH family.

It is found in the cytoplasm. The catalysed reaction is cytidine(1402) in 16S rRNA + S-adenosyl-L-methionine = N(4)-methylcytidine(1402) in 16S rRNA + S-adenosyl-L-homocysteine + H(+). Functionally, specifically methylates the N4 position of cytidine in position 1402 (C1402) of 16S rRNA. The polypeptide is Ribosomal RNA small subunit methyltransferase H (Acidovorax sp. (strain JS42)).